A 206-amino-acid polypeptide reads, in one-letter code: dTTP/UTP pyrophosphatase (206 aa).

Asp79 (proton acceptor) is an active-site residue.

It belongs to the Maf family. YhdE subfamily. It depends on a divalent metal cation as a cofactor.

The protein resides in the cytoplasm. The catalysed reaction is dTTP + H2O = dTMP + diphosphate + H(+). It carries out the reaction UTP + H2O = UMP + diphosphate + H(+). Its function is as follows. Nucleoside triphosphate pyrophosphatase that hydrolyzes dTTP and UTP. May have a dual role in cell division arrest and in preventing the incorporation of modified nucleotides into cellular nucleic acids. This is dTTP/UTP pyrophosphatase from Rhizobium johnstonii (strain DSM 114642 / LMG 32736 / 3841) (Rhizobium leguminosarum bv. viciae).